The chain runs to 274 residues: 4-hydroxy-tetrahydrodipicolinate reductase (274 aa).

12-17 (GAAGRM) contacts NAD(+). Arg39 contacts NADP(+). NAD(+)-binding positions include 102–104 (GTT) and 126–129 (SGNM). His160 (proton donor/acceptor) is an active-site residue. His161 contacts (S)-2,3,4,5-tetrahydrodipicolinate. Catalysis depends on Lys164, which acts as the Proton donor. 170–171 (GT) is a binding site for (S)-2,3,4,5-tetrahydrodipicolinate.

It belongs to the DapB family.

It localises to the cytoplasm. The enzyme catalyses (S)-2,3,4,5-tetrahydrodipicolinate + NAD(+) + H2O = (2S,4S)-4-hydroxy-2,3,4,5-tetrahydrodipicolinate + NADH + H(+). The catalysed reaction is (S)-2,3,4,5-tetrahydrodipicolinate + NADP(+) + H2O = (2S,4S)-4-hydroxy-2,3,4,5-tetrahydrodipicolinate + NADPH + H(+). Its pathway is amino-acid biosynthesis; L-lysine biosynthesis via DAP pathway; (S)-tetrahydrodipicolinate from L-aspartate: step 4/4. In terms of biological role, catalyzes the conversion of 4-hydroxy-tetrahydrodipicolinate (HTPA) to tetrahydrodipicolinate. The chain is 4-hydroxy-tetrahydrodipicolinate reductase from Rhizobium rhizogenes (strain K84 / ATCC BAA-868) (Agrobacterium radiobacter).